Here is a 356-residue protein sequence, read N- to C-terminus: Surface presentation of antigens protein SpaS (356 aa).

5 helical membrane-spanning segments follow: residues 29–49, 72–92, 132–152, 179–199, and 261–281; these read LIIA…GSFN, LAVF…CLVC, VKDT…AIIC, LLAL…LDAI, and HITI…ISVY.

The protein belongs to the type III secretion exporter family.

The protein resides in the cell inner membrane. Functionally, involved in a secretory pathway responsible for the surface presentation of determinants needed for the entry of Salmonella species into mammalian cells. The protein is Surface presentation of antigens protein SpaS (spaS) of Salmonella typhimurium (strain LT2 / SGSC1412 / ATCC 700720).